A 456-amino-acid chain; its full sequence is Histidine--tRNA ligase (456 aa).

Belongs to the class-II aminoacyl-tRNA synthetase family. In terms of assembly, homodimer.

The protein localises to the cytoplasm. It carries out the reaction tRNA(His) + L-histidine + ATP = L-histidyl-tRNA(His) + AMP + diphosphate + H(+). This is Histidine--tRNA ligase from Cupriavidus taiwanensis (strain DSM 17343 / BCRC 17206 / CCUG 44338 / CIP 107171 / LMG 19424 / R1) (Ralstonia taiwanensis (strain LMG 19424)).